A 320-amino-acid polypeptide reads, in one-letter code: Homoserine kinase (320 aa).

100–110 provides a ligand contact to ATP; it reads PLSSGMGSSAA.

Belongs to the GHMP kinase family. Homoserine kinase subfamily.

It localises to the cytoplasm. It carries out the reaction L-homoserine + ATP = O-phospho-L-homoserine + ADP + H(+). It functions in the pathway amino-acid biosynthesis; L-threonine biosynthesis; L-threonine from L-aspartate: step 4/5. Its function is as follows. Catalyzes the ATP-dependent phosphorylation of L-homoserine to L-homoserine phosphate. This is Homoserine kinase from Chlorobium phaeobacteroides (strain BS1).